Consider the following 223-residue polypeptide: Ribose-5-phosphate isomerase A (223 aa).

Substrate-binding positions include 29–32 (TGST), 82–85 (DGAD), and 95–98 (KGGG). The active-site Proton acceptor is Glu-104. Lys-122 lines the substrate pocket.

This sequence belongs to the ribose 5-phosphate isomerase family. In terms of assembly, homodimer.

It carries out the reaction aldehydo-D-ribose 5-phosphate = D-ribulose 5-phosphate. Its pathway is carbohydrate degradation; pentose phosphate pathway; D-ribose 5-phosphate from D-ribulose 5-phosphate (non-oxidative stage): step 1/1. Catalyzes the reversible conversion of ribose-5-phosphate to ribulose 5-phosphate. This Neisseria meningitidis serogroup C (strain 053442) protein is Ribose-5-phosphate isomerase A.